The following is a 356-amino-acid chain: DNA polymerase IV (356 aa).

Positions 4-185 constitute a UmuC domain; it reads IIHIDMDCYY…LALGKIPGVG (182 aa). Mg(2+) contacts are provided by Asp8 and Asp103. The active site involves Glu104.

Belongs to the DNA polymerase type-Y family. As to quaternary structure, monomer. Requires Mg(2+) as cofactor.

The protein localises to the cytoplasm. It catalyses the reaction DNA(n) + a 2'-deoxyribonucleoside 5'-triphosphate = DNA(n+1) + diphosphate. Poorly processive, error-prone DNA polymerase involved in untargeted mutagenesis. Copies undamaged DNA at stalled replication forks, which arise in vivo from mismatched or misaligned primer ends. These misaligned primers can be extended by PolIV. Exhibits no 3'-5' exonuclease (proofreading) activity. May be involved in translesional synthesis, in conjunction with the beta clamp from PolIII. In Pseudoalteromonas atlantica (strain T6c / ATCC BAA-1087), this protein is DNA polymerase IV.